We begin with the raw amino-acid sequence, 349 residues long: Ion-translocating oxidoreductase complex subunit D (349 aa).

Helical transmembrane passes span 20 to 42, 77 to 99, and 124 to 144; these read VMQR…FGWG, SAML…WMIV, and AMAA…TWIA. FMN phosphoryl threonine is present on Thr-185. Transmembrane regions (helical) follow at residues 212 to 232, 239 to 259, 265 to 285, 291 to 311, and 315 to 335; these read STGV…LVLL, WHIS…GFLL, ASPL…FIAT, ATSP…VYII, and GGYP…APFI.

Belongs to the NqrB/RnfD family. The complex is composed of six subunits: RnfA, RnfB, RnfC, RnfD, RnfE and RnfG. FMN is required as a cofactor.

The protein localises to the cell inner membrane. Part of a membrane-bound complex that couples electron transfer with translocation of ions across the membrane. This is Ion-translocating oxidoreductase complex subunit D from Shewanella baltica (strain OS185).